The primary structure comprises 745 residues: MVGPGPTASAAAEERWQKLQEYLAAKGKLKDPNAKPYLKAKNICPKPPPSKYTPGPKKDVSNHVLPSKTTRPINIKFQTKPASITASQKPESKPPKLPSRGLTSRCFSSNTDCKQSSKPQQQPRAVSFTAGLSRNPRQCPDIQELKTKQQQQAHGGNAKCTHPETNTHAAKQPVDGFPDETNKENLPQALPKPEKPDPELHSIRKPNTGSSNQTQKGLAPKQILSKSSVTQTALKDRANKQFIRNTQIRTQAVKSRPRPTVADSTRPREKPPQTAPSHSVPAHNKTQTSKKPMTKNTQDITVNRVRYGKPNETKIESCPATEQKVKHTKPSSQLNVLQGGHNSRHPNMRQDQKPVQPHLGPQTSCVLQKSRAISQRPNLTARNFNSVIPSTPNMRANKTLNNKYNNIFQQKAQTLDSKFRKFPPQSHFLNKTAPRTQASTAAASRKGAPSATQTHPHGKKPEGEDRRKQLEEWQKSKGKTYKRPPMKFKTKRKVIEEMNTSFWKSIEREEEEKKAQLELSKKIDSTLTECLRLIEEGVLPNEIFTIVSSIPEAEKFAKFWVCKAKLLASKGTFDAIGLYEEAIQNGATPVQELQEVLNVLQDPCRSTEAVTSDTSAAGTNTTSAEELAKEESEQPCPSLTEMEPIAAAAPRIPVSEWDNHGIKLQVAPIPRICGMPEVQDMKLITPVRRSARIERTVARYPEMLQEHDVVVASLNELLEVDKTECFIFRENEALPVTLGFEVLES.

4 disordered regions span residues 26–305, 319–362, 422–483, and 608–638; these read KGKL…VNRV, PATE…LGPQ, FPPQ…TYKR, and EAVT…PCPS. Polar residues-rich tracts occupy residues 67-89 and 101-136; these read SKTT…ASQK and GLTS…SRNP. The KEN box motif lies at 183–185; sequence KEN. Over residues 192-202 the composition is skewed to basic and acidic residues; it reads KPEKPDPELHS. A Glycyl lysine isopeptide (Lys-Gly) (interchain with G-Cter in SUMO1); alternate cross-link involves residue Lys-195. Lys-195 participates in a covalent cross-link: Glycyl lysine isopeptide (Lys-Gly) (interchain with G-Cter in SUMO2); alternate. 4 stretches are compositionally biased toward polar residues: residues 205–216, 224–233, 242–253, and 284–301; these read KPNTGSSNQTQK, LSKSSVTQTA, FIRNTQIRTQAV, and NKTQ…QDIT. Over residues 427 to 442 the composition is skewed to polar residues; the sequence is HFLNKTAPRTQASTAA. Residues 459–475 are compositionally biased toward basic and acidic residues; that stretch reads KKPEGEDRRKQLEEWQK. The segment covering 608–624 has biased composition (polar residues); sequence EAVTSDTSAAGTNTTSA. A Phosphoserine modification is found at Ser-745.

This sequence belongs to the CKAP2 family. Post-translationally, ubiquitinated by the anaphase promoting complex/cyclosome (APC/C). As to expression, highly expressed in regions of active neurogenesis and neural stem/progenitor cells (NSPCs), both embryonic and adult, not detected in lung, liver, kidney, heart, and skeletal muscle.

The protein localises to the cytoplasm. Its subcellular location is the cytoskeleton. It is found in the spindle pole. In terms of biological role, microtubule-associated protein required for mitotic spindle formation and cell-cycle progression in neural progenitor cells. This chain is Cytoskeleton-associated protein 2-like (Ckap2l), found in Mus musculus (Mouse).